Consider the following 459-residue polypeptide: Bifunctional protein GlmU (459 aa).

The segment at 1-229 (MSNFAIILAA…FDESLGVNDR (229 aa)) is pyrophosphorylase. UDP-N-acetyl-alpha-D-glucosamine-binding positions include 8–11 (LAAG), K22, Q72, and 77–78 (GT). D102 is a binding site for Mg(2+). UDP-N-acetyl-alpha-D-glucosamine is bound by residues G139, E154, N169, and N227. Position 227 (N227) interacts with Mg(2+). The segment at 230–250 (VALATAESVMRRRINHKHMVN) is linker. The segment at 251–459 (GVSFVNPEAT…TRLPHHPKNQ (209 aa)) is N-acetyltransferase. R332 and K350 together coordinate UDP-N-acetyl-alpha-D-glucosamine. The active-site Proton acceptor is H362. Residues Y365 and N376 each contribute to the UDP-N-acetyl-alpha-D-glucosamine site. Acetyl-CoA contacts are provided by residues A379, 385–386 (NY), S404, A422, and R439.

In the N-terminal section; belongs to the N-acetylglucosamine-1-phosphate uridyltransferase family. The protein in the C-terminal section; belongs to the transferase hexapeptide repeat family. Homotrimer. Mg(2+) serves as cofactor.

Its subcellular location is the cytoplasm. It carries out the reaction alpha-D-glucosamine 1-phosphate + acetyl-CoA = N-acetyl-alpha-D-glucosamine 1-phosphate + CoA + H(+). The catalysed reaction is N-acetyl-alpha-D-glucosamine 1-phosphate + UTP + H(+) = UDP-N-acetyl-alpha-D-glucosamine + diphosphate. It functions in the pathway nucleotide-sugar biosynthesis; UDP-N-acetyl-alpha-D-glucosamine biosynthesis; N-acetyl-alpha-D-glucosamine 1-phosphate from alpha-D-glucosamine 6-phosphate (route II): step 2/2. Its pathway is nucleotide-sugar biosynthesis; UDP-N-acetyl-alpha-D-glucosamine biosynthesis; UDP-N-acetyl-alpha-D-glucosamine from N-acetyl-alpha-D-glucosamine 1-phosphate: step 1/1. The protein operates within bacterial outer membrane biogenesis; LPS lipid A biosynthesis. Its function is as follows. Catalyzes the last two sequential reactions in the de novo biosynthetic pathway for UDP-N-acetylglucosamine (UDP-GlcNAc). The C-terminal domain catalyzes the transfer of acetyl group from acetyl coenzyme A to glucosamine-1-phosphate (GlcN-1-P) to produce N-acetylglucosamine-1-phosphate (GlcNAc-1-P), which is converted into UDP-GlcNAc by the transfer of uridine 5-monophosphate (from uridine 5-triphosphate), a reaction catalyzed by the N-terminal domain. In Streptococcus pneumoniae (strain Taiwan19F-14), this protein is Bifunctional protein GlmU.